The sequence spans 386 residues: Tumor necrosis factor receptor superfamily member 10D (386 aa).

Disordered stretches follow at residues 1–25 (MGLW…ARTA) and 62–90 (DEVP…SHRS). The signal sequence occupies residues 1 to 55 (MGLWGQSVPTASSARAGRYPGARTASGTRPWLLDPKILKFVVFIVAVLLPVRVDS). The Extracellular portion of the chain corresponds to 56-211 (ATIPRQDEVP…ILGMLASPYH (156 aa)). 3 TNFR-Cys repeats span residues 58–97 (IPRQ…GACN), 98–139 (PCTE…DTVC), and 140–180 (QCEK…DIKC). Polar residues predominate over residues 64-75 (VPQQTVAPQQQR). 7 disulfide bridges follow: C83–C96, C99–C115, C118–C131, C121–C139, C141–C155, C158–C172, and C162–C180. An N-linked (GlcNAc...) asparagine glycan is attached at N127. N-linked (GlcNAc...) asparagine glycosylation occurs at N182. The helical transmembrane segment at 212–232 (YLIIIVVLVIILAVVVVGFSC) threads the bilayer. Residues 233-386 (RKKFISYLKG…DEAGSATSCL (154 aa)) are Cytoplasmic-facing. The Death; truncated domain maps to 340 to 366 (SADISTLLDASATLEEGHAKETIQDQL).

In terms of tissue distribution, widely expressed, in particular in fetal kidney, lung and liver, and in adult testis and liver. Also expressed in peripheral blood leukocytes, colon and small intestine, ovary, prostate, thymus, spleen, pancreas, kidney, lung, placenta and heart.

The protein localises to the membrane. Functionally, receptor for the cytotoxic ligand TRAIL. Contains a truncated death domain and hence is not capable of inducing apoptosis but protects against TRAIL-mediated apoptosis. Reports are contradictory with regards to its ability to induce the NF-kappa-B pathway. According to PubMed:9382840, it cannot but according to PubMed:9430226, it can induce the NF-kappa-B pathway. The protein is Tumor necrosis factor receptor superfamily member 10D of Homo sapiens (Human).